A 219-amino-acid polypeptide reads, in one-letter code: Ribonuclease HII (219 aa).

The RNase H type-2 domain occupies 22–219 (GLVAGVDEVG…LLAMRMEAVV (198 aa)). A divalent metal cation-binding residues include D28, E29, and D125.

It belongs to the RNase HII family. The cofactor is Mn(2+). Requires Mg(2+) as cofactor.

It is found in the cytoplasm. The enzyme catalyses Endonucleolytic cleavage to 5'-phosphomonoester.. Its function is as follows. Endonuclease that specifically degrades the RNA of RNA-DNA hybrids. This is Ribonuclease HII from Granulibacter bethesdensis (strain ATCC BAA-1260 / CGDNIH1).